Consider the following 271-residue polypeptide: Probable short-chain type dehydrogenase/reductase VdlC (271 aa).

Position 1-25 (1-25) interacts with NAD(+); it reads MAVITGASSGIGLECVLMLLNQGYK. Serine 129 contributes to the substrate binding site. Catalysis depends on tyrosine 142, which acts as the Proton acceptor.

It belongs to the short-chain dehydrogenases/reductases (SDR) family.

The protein is Probable short-chain type dehydrogenase/reductase VdlC (vdlC) of Helicobacter pylori (strain J99 / ATCC 700824) (Campylobacter pylori J99).